The following is a 227-amino-acid chain: Cytochrome c oxidase subunit 2 (227 aa).

The Mitochondrial intermembrane segment spans residues 1-14 (MPYPMQLGFQDATS). A helical transmembrane segment spans residues 15–45 (PIMEELTYFHDHTLMIVFLISSLVLYIIILM). The Mitochondrial matrix portion of the chain corresponds to 46 to 59 (LTTKLTHTSTMDAQ). The chain crosses the membrane as a helical span at residues 60 to 87 (EVETIWTILPAVILVLIALPSLRILYMM). The Mitochondrial intermembrane portion of the chain corresponds to 88-227 (DEIYNPYLTI…YFEKWSSMMQ (140 aa)). Cu cation-binding residues include His-161, Cys-196, Glu-198, Cys-200, His-204, and Met-207. A Mg(2+)-binding site is contributed by Glu-198. A Phosphotyrosine modification is found at Tyr-218.

The protein belongs to the cytochrome c oxidase subunit 2 family. As to quaternary structure, component of the cytochrome c oxidase (complex IV, CIV), a multisubunit enzyme composed of 14 subunits. The complex is composed of a catalytic core of 3 subunits MT-CO1, MT-CO2 and MT-CO3, encoded in the mitochondrial DNA, and 11 supernumerary subunits COX4I, COX5A, COX5B, COX6A, COX6B, COX6C, COX7A, COX7B, COX7C, COX8 and NDUFA4, which are encoded in the nuclear genome. The complex exists as a monomer or a dimer and forms supercomplexes (SCs) in the inner mitochondrial membrane with NADH-ubiquinone oxidoreductase (complex I, CI) and ubiquinol-cytochrome c oxidoreductase (cytochrome b-c1 complex, complex III, CIII), resulting in different assemblies (supercomplex SCI(1)III(2)IV(1) and megacomplex MCI(2)III(2)IV(2)). Found in a complex with TMEM177, COA6, COX18, COX20, SCO1 and SCO2. Interacts with TMEM177 in a COX20-dependent manner. Interacts with COX20. Interacts with COX16. It depends on Cu cation as a cofactor.

Its subcellular location is the mitochondrion inner membrane. It catalyses the reaction 4 Fe(II)-[cytochrome c] + O2 + 8 H(+)(in) = 4 Fe(III)-[cytochrome c] + 2 H2O + 4 H(+)(out). Functionally, component of the cytochrome c oxidase, the last enzyme in the mitochondrial electron transport chain which drives oxidative phosphorylation. The respiratory chain contains 3 multisubunit complexes succinate dehydrogenase (complex II, CII), ubiquinol-cytochrome c oxidoreductase (cytochrome b-c1 complex, complex III, CIII) and cytochrome c oxidase (complex IV, CIV), that cooperate to transfer electrons derived from NADH and succinate to molecular oxygen, creating an electrochemical gradient over the inner membrane that drives transmembrane transport and the ATP synthase. Cytochrome c oxidase is the component of the respiratory chain that catalyzes the reduction of oxygen to water. Electrons originating from reduced cytochrome c in the intermembrane space (IMS) are transferred via the dinuclear copper A center (CU(A)) of subunit 2 and heme A of subunit 1 to the active site in subunit 1, a binuclear center (BNC) formed by heme A3 and copper B (CU(B)). The BNC reduces molecular oxygen to 2 water molecules using 4 electrons from cytochrome c in the IMS and 4 protons from the mitochondrial matrix. This is Cytochrome c oxidase subunit 2 (MT-CO2) from Osphranter robustus (Wallaroo).